The sequence spans 491 residues: Allene oxide synthase 3 (491 aa).

The heme b site is built by Lys104, His135, and Lys139. 2 residues coordinate (13S)-hydroperoxy-(9Z,11E)-octadecadienoate: Asn296 and Lys302. Asn296 lines the (13S)-hydroperoxy-(9Z,11E,15Z)-octadecatrienoate pocket. Heme b-binding residues include Lys442 and Cys444.

Belongs to the cytochrome P450 family. Heme b serves as cofactor. As to expression, expressed in roots. Not detected in aerial tissues, including cotyledons, leaves, stems and flower buds.

The enzyme catalyses (13S)-hydroperoxy-(9Z,11E,15Z)-octadecatrienoate = (9Z,13S,15Z)-12,13-epoxyoctadeca-9,11,15-trienoate + H2O. It carries out the reaction (13S)-hydroperoxy-(9Z,11E)-octadecadienoate = (9Z,13S)-12,13-epoxyoctadeca-9,11-dienoate + H2O. It catalyses the reaction (9Z,13S,15Z)-12,13-epoxyoctadeca-9,11,15-trienoate = (9S,13S,15Z)-12-oxophyto-10,15-dienoate. In terms of biological role, cytochrome P450 metabolizing both 13- and 9-hydroperoxides of linoleic and linolenic acids, but with a marked preference for 9-hydroperoxy fatty acids. Catalyzes not only the synthesis of allene oxide, but also its hydrolysis and cyclization. The first step is the synthesis of (12Z)-9,10-epoxyoctadeca-10,12-dienoic acid (9,10-EOD) and the final products are (9R)-alpha-ketol and the racemic cis-10-oxo-11-phytoenoic acid. The cyclase activity possesses regiospecificity and (9Z)-12,13-epoxyoctadeca-9,11-dienoic acid (12,13-EOD) is significantly less efficient as a substrate for cyclopentenone production than 9,10-EOD. Has no hydroperoxide lyase activity. May play a defensive role against soil-borne pests that affect roots or juvenile tissues as they emerge from the germinating seed. This chain is Allene oxide synthase 3, found in Solanum lycopersicum (Tomato).